Here is a 285-residue protein sequence, read N- to C-terminus: Methanethiol S-methyltransferase 1 (285 aa).

The next 5 helical transmembrane spans lie at 55–75, 88–108, 132–152, 162–182, and 224–244; these read AYLVFFVTILYAIGFVMGLVV, AEAVIINLLLMALFAVQHSVM, LFASLSLLLLFWQWRPLPTVI, VTLVTVSFAGWVLVFTSTFII, and FIVAFWAAPVMTAGHLLFAAV.

The protein belongs to the nurim family.

The protein resides in the membrane. It carries out the reaction methanethiol + S-adenosyl-L-methionine = dimethyl sulfide + S-adenosyl-L-homocysteine + H(+). In terms of biological role, catalyzes the methylation of methanethiol (MeSH) to yield dimethylsulphide (DMS). This is Methanethiol S-methyltransferase 1 from Bradyrhizobium diazoefficiens (strain JCM 10833 / BCRC 13528 / IAM 13628 / NBRC 14792 / USDA 110).